A 443-amino-acid chain; its full sequence is Putative transporter AmpG 1 (443 aa).

A run of 13 helical transmembrane segments spans residues 5-25, 42-62, 78-98, 104-124, 143-163, 171-191, 230-250, 254-274, 299-319, 324-344, 354-374, 393-413, and 415-435; these read SHIYIIWLFGFISGFNVMITG, IGMLSFITLPYSINFLLAPVF, LSWICLTSTTLISLIFILSFL, LVLLSFIAFIISFFSAAQDTI, GIYILGYRVGMLLASSGAIYL, AIYKIFAGVIFVYLILLILVA, FNYFKNFISAYLLKIFSGFYF, DINLAYYIILILIFLVLYRLP, VCKFCGVMGAIIGGLIGGIIM, ILYSILLFGIIHALSHIFFIL, ILFITIGVESITGGMTMTAYI, LSSMMGISRSIFPIISGYMVV, and FGWQNFFLFTTIITIPSLLIL.

It belongs to the major facilitator superfamily.

It localises to the cell inner membrane. The chain is Putative transporter AmpG 1 (ampG1) from Rickettsia prowazekii (strain Madrid E).